Here is a 264-residue protein sequence, read N- to C-terminus: Thymidylate synthase (264 aa).

Arg21 contributes to the dUMP binding site. Residue His51 participates in (6R)-5,10-methylene-5,6,7,8-tetrahydrofolate binding. 126-127 (RR) provides a ligand contact to dUMP. Cys146 functions as the Nucleophile in the catalytic mechanism. DUMP-binding positions include 166 to 169 (RSCD), Asn177, and 207 to 209 (HLY). Residue Asp169 coordinates (6R)-5,10-methylene-5,6,7,8-tetrahydrofolate. Ala263 lines the (6R)-5,10-methylene-5,6,7,8-tetrahydrofolate pocket.

It belongs to the thymidylate synthase family. Bacterial-type ThyA subfamily. Homodimer.

It localises to the cytoplasm. It carries out the reaction dUMP + (6R)-5,10-methylene-5,6,7,8-tetrahydrofolate = 7,8-dihydrofolate + dTMP. It functions in the pathway pyrimidine metabolism; dTTP biosynthesis. In terms of biological role, catalyzes the reductive methylation of 2'-deoxyuridine-5'-monophosphate (dUMP) to 2'-deoxythymidine-5'-monophosphate (dTMP) while utilizing 5,10-methylenetetrahydrofolate (mTHF) as the methyl donor and reductant in the reaction, yielding dihydrofolate (DHF) as a by-product. This enzymatic reaction provides an intracellular de novo source of dTMP, an essential precursor for DNA biosynthesis. In Salmonella arizonae (strain ATCC BAA-731 / CDC346-86 / RSK2980), this protein is Thymidylate synthase.